The sequence spans 330 residues: mRNA-capping enzyme (330 aa).

Lys-82 acts as the N6-GMP-lysine intermediate in catalysis.

This sequence belongs to the eukaryotic GTase family. Monomer. Mg(2+) serves as cofactor. Mn(2+) is required as a cofactor.

The enzyme catalyses a 5'-end diphospho-ribonucleoside in mRNA + GTP + H(+) = a 5'-end (5'-triphosphoguanosine)-ribonucleoside in mRNA + diphosphate. MRNA capping. Transfers a GMP cap onto the end of mRNA that terminates with a 5'-diphosphate tail. In Chlorella (PBCV-1), this protein is mRNA-capping enzyme.